The chain runs to 118 residues: Urease subunit beta (118 aa).

It belongs to the urease beta subunit family. In terms of assembly, heterotrimer of UreA (gamma), UreB (beta) and UreC (alpha) subunits. Three heterotrimers associate to form the active enzyme.

Its subcellular location is the cytoplasm. It carries out the reaction urea + 2 H2O + H(+) = hydrogencarbonate + 2 NH4(+). It participates in nitrogen metabolism; urea degradation; CO(2) and NH(3) from urea (urease route): step 1/1. The sequence is that of Urease subunit beta from Aliivibrio fischeri (strain ATCC 700601 / ES114) (Vibrio fischeri).